A 389-amino-acid chain; its full sequence is Cellobiose 2-epimerase (389 aa).

Belongs to the cellobiose 2-epimerase family.

The protein resides in the cytoplasm. It catalyses the reaction D-cellobiose = beta-D-glucosyl-(1-&gt;4)-D-mannopyranose. Enhanced by Mg(2+) and Ca(2+) ions, ethylenediaminetetraacetic acid, ethylene glycol tetraacetic acid and citrate. Inhibited by Al(3+), Fe(3+), Co(2+), Cu(2+), Zn(2+), Pb(2+) and Ag(+) ions, iodoacetate, 4-chloromercuribenzoate and N-bromosuccinimide. Its function is as follows. Catalyzes the reversible epimerization of cellobiose to 4-O-beta-D-glucopyranosyl-D-mannose (Glc-Man). Can also epimerize cellotriose to Glc-Glc-Man, cellotetraose to Glc-Glc-Glc-Man, and lactose to epilactose. The chain is Cellobiose 2-epimerase (ce-ne1) from Ruminococcus albus.